The primary structure comprises 250 residues: tRNA (guanine-N(1)-)-methyltransferase (250 aa).

S-adenosyl-L-methionine contacts are provided by residues Gly112 and 132 to 137; that span reads IGDFVL.

It belongs to the RNA methyltransferase TrmD family. As to quaternary structure, homodimer.

The protein localises to the cytoplasm. It carries out the reaction guanosine(37) in tRNA + S-adenosyl-L-methionine = N(1)-methylguanosine(37) in tRNA + S-adenosyl-L-homocysteine + H(+). Functionally, specifically methylates guanosine-37 in various tRNAs. This is tRNA (guanine-N(1)-)-methyltransferase from Marinomonas sp. (strain MWYL1).